Here is a 399-residue protein sequence, read N- to C-terminus: uncharacterized protein (399 aa).

5 helical membrane-spanning segments follow: residues 26–46, 266–286, 301–321, 324–344, and 358–378; these read LLTIIGIVIGVLAMVSLISLG, VITIFVVGVAAISLLVGAVGI, IGILKALGAETTDILAIFVVE, FLGLFGGIVGLVLGILLAEVI, and AWISWELIVGVLIFSFLVGVI.

The protein belongs to the ABC-4 integral membrane protein family.

The protein localises to the cell membrane. This is an uncharacterized protein from Methanocaldococcus jannaschii (strain ATCC 43067 / DSM 2661 / JAL-1 / JCM 10045 / NBRC 100440) (Methanococcus jannaschii).